The following is a 303-amino-acid chain: Coenzyme PQQ synthesis protein B (303 aa).

It belongs to the PqqB family.

It participates in cofactor biosynthesis; pyrroloquinoline quinone biosynthesis. May be involved in the transport of PQQ or its precursor to the periplasm. The chain is Coenzyme PQQ synthesis protein B from Pseudomonas putida (strain ATCC 47054 / DSM 6125 / CFBP 8728 / NCIMB 11950 / KT2440).